Reading from the N-terminus, the 827-residue chain is Glycerol-3-phosphate acyltransferase (827 aa).

The HXXXXD motif motif lies at 325–330 (CHRSHM).

The protein belongs to the GPAT/DAPAT family.

It localises to the cell inner membrane. The catalysed reaction is sn-glycerol 3-phosphate + an acyl-CoA = a 1-acyl-sn-glycero-3-phosphate + CoA. Its pathway is phospholipid metabolism; CDP-diacylglycerol biosynthesis; CDP-diacylglycerol from sn-glycerol 3-phosphate: step 1/3. This Shigella flexneri serotype 5b (strain 8401) protein is Glycerol-3-phosphate acyltransferase.